The following is a 315-amino-acid chain: Tubulin beta-1 chain (315 aa).

6 residues coordinate GTP: S6, G10, T11, G12, N72, and N94. Residues 295 to 315 (DATADEEEYYEDEEEEEAQGM) are disordered. Acidic residues predominate over residues 297 to 315 (TADEEEYYEDEEEEEAQGM).

The protein belongs to the tubulin family. Dimer of alpha and beta chains. A typical microtubule is a hollow water-filled tube with an outer diameter of 25 nm and an inner diameter of 15 nM. Alpha-beta heterodimers associate head-to-tail to form protofilaments running lengthwise along the microtubule wall with the beta-tubulin subunit facing the microtubule plus end conferring a structural polarity. Microtubules usually have 13 protofilaments but different protofilament numbers can be found in some organisms and specialized cells. It depends on Mg(2+) as a cofactor.

It is found in the cytoplasm. The protein localises to the cytoskeleton. Functionally, tubulin is the major constituent of microtubules, a cylinder consisting of laterally associated linear protofilaments composed of alpha- and beta-tubulin heterodimers. Microtubules grow by the addition of GTP-tubulin dimers to the microtubule end, where a stabilizing cap forms. Below the cap, tubulin dimers are in GDP-bound state, owing to GTPase activity of alpha-tubulin. This is Tubulin beta-1 chain (TUBB1) from Daucus carota (Wild carrot).